Consider the following 242-residue polypeptide: Carboxy-S-adenosyl-L-methionine synthase (242 aa).

S-adenosyl-L-methionine contacts are provided by residues tyrosine 39, 64-66, 89-90, 117-118, asparagine 132, and arginine 199; these read GCS, DN, and DI.

This sequence belongs to the class I-like SAM-binding methyltransferase superfamily. Cx-SAM synthase family. Homodimer.

The catalysed reaction is prephenate + S-adenosyl-L-methionine = carboxy-S-adenosyl-L-methionine + 3-phenylpyruvate + H2O. In terms of biological role, catalyzes the conversion of S-adenosyl-L-methionine (SAM) to carboxy-S-adenosyl-L-methionine (Cx-SAM). This chain is Carboxy-S-adenosyl-L-methionine synthase, found in Vibrio atlanticus (strain LGP32) (Vibrio splendidus (strain Mel32)).